We begin with the raw amino-acid sequence, 565 residues long: DNA repair protein RAD7 (565 aa).

Disordered regions lie at residues 1-22 and 41-68; these read MYRSRNRPKRGGENEVKGPNSA and WYQRQSKKQEDATDEKKGKAEDDSFTAE. Residues 1 to 200 form a hydrophilic region; sequence MYRSRNRPKR…SKLVFNKLRD (200 aa). Over residues 47–62 the composition is skewed to basic and acidic residues; it reads KKQEDATDEKKGKAED. Phosphoserine is present on residues Ser-64 and Ser-85. A disordered region spans residues 105-137; that stretch reads ADSDEEEYETSHISDTPVSLSSANDRESLTKKR. Residues 115 to 127 are compositionally biased toward polar residues; it reads SHISDTPVSLSSA.

It to S.pombe SpCC613.14. Component of the global genome repair (GGR) complex composed of at least ABF1, RAD7 and RAD16. Interacts with ELC1.

Functionally, component of the global genome repair (GGR) complex which promotes global genome nucleotide excision repair (GG-NER) which removes DNA damage from nontranscribing DNA. This protein is one of 10 proteins (RAD1, 2,3,4,7,10,14, 16,23 and MMS19) involved in excision repair of DNA damaged with UV light, bulky adducts, or cross-linking agents. The polypeptide is DNA repair protein RAD7 (RAD7) (Saccharomyces cerevisiae (strain ATCC 204508 / S288c) (Baker's yeast)).